A 940-amino-acid polypeptide reads, in one-letter code: Protein translocase subunit SecA (940 aa).

ATP is bound by residues glutamine 86, glycine 104 to threonine 108, and aspartate 494. Residues alanine 884–lysine 940 form a disordered region. Basic and acidic residues predominate over residues asparagine 929–lysine 940.

Belongs to the SecA family. Monomer and homodimer. Part of the essential Sec protein translocation apparatus which comprises SecA, SecYEG and auxiliary proteins SecDF. Other proteins may also be involved.

The protein localises to the cell membrane. Its subcellular location is the cytoplasm. The enzyme catalyses ATP + H2O + cellular proteinSide 1 = ADP + phosphate + cellular proteinSide 2.. Functionally, part of the Sec protein translocase complex. Interacts with the SecYEG preprotein conducting channel. Has a central role in coupling the hydrolysis of ATP to the transfer of proteins into and across the cell membrane, serving as an ATP-driven molecular motor driving the stepwise translocation of polypeptide chains across the membrane. In Clavibacter sepedonicus (Clavibacter michiganensis subsp. sepedonicus), this protein is Protein translocase subunit SecA.